Consider the following 815-residue polypeptide: Chromatin assembly factor 1 subunit FAS1 (815 aa).

5 disordered regions span residues 1-39, 292-330, 434-477, 502-577, and 791-815; these read MDEV…TSEE, NNKE…KKQL, KLST…KKSR, QVVK…EGVQ, and RCLP…NENA. Composition is skewed to basic and acidic residues over residues 10–21 and 292–328; these read NENRKTMIEPKK and NNKE…ELKK. Residues 244–336 adopt a coiled-coil conformation; the sequence is EEKLLLKQLE…KKQLQVQKQA (93 aa). 2 stretches are compositionally biased toward acidic residues: residues 516–532 and 554–576; these read LDYE…EEAG and DDED…DEGV. Over residues 806–815 the composition is skewed to basic and acidic residues; it reads AAERLENENA.

Belongs to the CHAF1A family. Component of the chromatin assembly factor 1 (CAF-1) complex, composed of FAS1, FAS2 and MSI1. Interacts with CYP71. As to expression, expressed in the shoot apical meristem, young leaf primordia, root tip and first lateral root primordium at the hypocotyl/root junction.

It localises to the nucleus. Its function is as follows. Component of the chromatin assembly factor complex (CAF-1) involved in chromatin assembly following DNA replication and DNA repair. Assembles histone octamers onto replicating DNA in vitro. Required for several aspects of development, including seedling growth and leaf hair differentiation. Plays a critical role in the organization of shoot apical meristem (SAM) and root apical meristem (RAM) during postembryonic development by facilitating stable maintenance of gene expression states. Seems not required to maintain transcriptional repression of heterochromatic genes. Involved in heterologous recombination. May repress endocycle. This Arabidopsis thaliana (Mouse-ear cress) protein is Chromatin assembly factor 1 subunit FAS1 (FAS1).